We begin with the raw amino-acid sequence, 202 residues long: Holliday junction resolvase RecU (202 aa).

Positions 85, 87, 100, and 119 each coordinate Mg(2+).

The protein belongs to the RecU family. Requires Mg(2+) as cofactor.

It localises to the cytoplasm. The enzyme catalyses Endonucleolytic cleavage at a junction such as a reciprocal single-stranded crossover between two homologous DNA duplexes (Holliday junction).. Functionally, endonuclease that resolves Holliday junction intermediates in genetic recombination. Cleaves mobile four-strand junctions by introducing symmetrical nicks in paired strands. Promotes annealing of linear ssDNA with homologous dsDNA. Required for DNA repair, homologous recombination and chromosome segregation. The chain is Holliday junction resolvase RecU from Streptococcus pyogenes serotype M6 (strain ATCC BAA-946 / MGAS10394).